A 952-amino-acid polypeptide reads, in one-letter code: Glutamate receptor 2.7 (952 aa).

A signal peptide spans 1 to 32 (MKVMNPRKTNNTFMYYFVLFVCGFVLMEGCLG). At 33–582 (QNQTTEIKVG…NTWVFLRPWS (550 aa)) the chain is on the extracellular side. 5 N-linked (GlcNAc...) asparagine glycosylation sites follow: Asn-34, Asn-60, Asn-355, Asn-428, and Asn-546. Residues 583–603 (LDLWVTTACFFVFIGFIVWIL) traverse the membrane as a helical segment. The Cytoplasmic segment spans residues 604 to 612 (EHRVNTDFR). Residues 613–633 (GPPHHQIGTSFWFAFSTMNFA) traverse the membrane as a helical segment. At 634 to 637 (HREK) the chain is on the cytoplasmic side. A helical membrane pass occupies residues 638–658 (VVSNLARFVVLVWCFVVLVLI). Residues 659-821 (QSYTANLTSF…LSSNHLSLSS (163 aa)) lie on the Extracellular side of the membrane. Residues Asn-664, Asn-728, Asn-748, Asn-784, and Asn-809 are each glycosylated (N-linked (GlcNAc...) asparagine). A helical transmembrane segment spans residues 822–842 (FWGLFLIAGIASFLALLIFVA). The Cytoplasmic segment spans residues 843 to 952 (NFLYEHKHTL…ESAIIQCEGE (110 aa)). The segment covering 889-908 (VSSPITQGSSSPLTDQSTPL) has biased composition (polar residues). Disordered regions lie at residues 889–914 (VSSP…SPEQ) and 932–952 (FTTQ…CEGE).

This sequence belongs to the glutamate-gated ion channel (TC 1.A.10.1) family. May form heteromers. In terms of tissue distribution, expressed predominantly in leaves.

Its subcellular location is the membrane. In terms of biological role, glutamate-gated receptor that probably acts as a non-selective cation channel. May be involved in light-signal transduction and calcium homeostasis via the regulation of calcium influx into cells. The chain is Glutamate receptor 2.7 (GLR2.7) from Arabidopsis thaliana (Mouse-ear cress).